The sequence spans 64 residues: MKFLMKKCVRCGRYTFKDVCPVCNGQTTVPHPPRFSPEDKYVKYRVLAKLTKERPSSEGSTLSS.

This sequence belongs to the NOP10 family.

Involved in ribosome biogenesis; more specifically in 18S rRNA pseudouridylation and in cleavage of pre-rRNA. This Ignicoccus hospitalis (strain KIN4/I / DSM 18386 / JCM 14125) protein is Ribosome biogenesis protein Nop10.